A 526-amino-acid polypeptide reads, in one-letter code: Radial spoke head protein 6 homolog A (526 aa).

Disordered regions lie at residues 180–231, 371–411, and 469–526; these read EGED…EENG, VKSE…DAEI, and PPAP…EEDD. Acidic residues-rich tracts occupy residues 181 to 212 and 374 to 395; these read GEDDEAEEGGEEEEKGEVEDDVEEEENEEAED and EEEEDEEEAEEEEKEEENEPEP. Positions 497–506 are enriched in basic and acidic residues; sequence QALKAAKEEA. Residues 507–526 are compositionally biased toward acidic residues; the sequence is EAAAEEMEEEEDEEEEEEDD.

This sequence belongs to the flagellar radial spoke RSP4/6 family. Component of sperm axonemal radial spoke complexes.

The protein resides in the cytoplasm. It localises to the cytoskeleton. It is found in the flagellum axoneme. Its function is as follows. Functions as part of radial spoke complexes in the axoneme of sperm flagella that play an important part in motility. The triple radial spokes (RS1, RS2 and RS3) are required to modulate beating of the sperm flagellum. The chain is Radial spoke head protein 6 homolog A (rsph6a) from Xenopus tropicalis (Western clawed frog).